Here is a 502-residue protein sequence, read N- to C-terminus: uncharacterized protein (502 aa).

Helical transmembrane passes span 10-30 (NLTL…IXIF) and 473-493 (FSLI…FGLV).

The protein resides in the cell membrane. This is an uncharacterized protein from Borreliella burgdorferi (strain ATCC 35210 / DSM 4680 / CIP 102532 / B31) (Borrelia burgdorferi).